We begin with the raw amino-acid sequence, 641 residues long: Epithelial sodium channel subunit beta (641 aa).

Over 1 to 50 the chain is Cytoplasmic; that stretch reads MHVKKYLLKGLHRLQKGPGYTYKELLVWYCDNTNTHGPKRIICEGPKKKA. The chain crosses the membrane as a helical span at residues 51–71; it reads MWFVLTLLFTSLVCWQWGLFI. Topologically, residues 72 to 533 are extracellular; it reads KTYLNWEVSV…GGQFGFWMGG (462 aa). Cystine bridges form between C98–C273, C185–C190, C197–C204, C250–C257, C362–C449, C387–C445, C391–C441, C400–C427, and C402–C416. N141 is a glycosylation site (N-linked (GlcNAc...) asparagine). A glycan (N-linked (GlcNAc...) asparagine) is linked at N379. The chain crosses the membrane as a helical span at residues 534–554; sequence SVLCLIEFGEIIIDFVWITII. The Cytoplasmic portion of the chain corresponds to 555-641; sequence KLVALAKSVR…IESDSEGDAI (87 aa). The tract at residues 597-624 is disordered; it reads TPGPDVEAYPHEQNPPIPGTPPPNYDSL. Residues 609–620 show a composition bias toward pro residues; it reads QNPPIPGTPPPN. The PY motif; recruits WW domain-containing proteins and is thereby required for ubiquitination and inhibition of the channel by NEDD4 and NEDD4L motif lies at 617–621; sequence PPPNY. 2 positions are modified to phosphoserine: S634 and S636.

Belongs to the amiloride-sensitive sodium channel (TC 1.A.6) family. SCNN1B subfamily. As to quaternary structure, component of the heterotrimeric epithelial sodium channel (ENaC) composed of an alpha/SCNN1A, a beta/SCNN1B and a gamma/SCNN1G subunit. An additional delta/SCNN1D subunit can replace the alpha/SCNN1A subunit to form an alternative channel with specific properties. Interacts with WWP1 (via WW domains). Interacts with WWP2 (via WW domains); inhibits the channel. Interacts with the full-length immature form of PCSK9 (pro-PCSK9). Interacts (N-glycosylated) with BPIFA1; the interaction is direct and inhibits the proteolytic processing of SCNN1A and SCNN1G and the activation of ENaC. In terms of processing, ubiquitinated. Can be ubiquitinated at multiple sites and undergo monoubiquitination and polyubiquitination. Ubiquitination by NEDD4 or NEDD4L inhibits the ENaC channel through endocytosis, intracellular retention and degradation of its individual subunits. However, some studies could not confirm the ubiquitination of this subunit of the ENaC. Post-translationally, phosphorylated on serine and threonine residues. Aldosterone and insulin increase the basal level of phosphorylation. N-glycosylated. N-glycosylation is required for interaction with BPIFA1.

It localises to the apical cell membrane. It is found in the cytoplasmic vesicle membrane. It catalyses the reaction Na(+)(in) = Na(+)(out). Its activity is regulated as follows. Originally identified and characterized by its inhibition by the diuretic drug amiloride. This is one of the three pore-forming subunits of the heterotrimeric epithelial sodium channel (ENaC), a critical regulator of sodium balance and fluid homeostasis. ENaC operates in epithelial tissues, where it mediates the electrodiffusion of sodium ions from extracellular fluid through the apical membrane of cells, with water following osmotically. It plays a key role in maintaining sodium homeostasis through electrogenic sodium reabsorption in the kidneys. Additionally, ENaC is essential for airway surface liquid homeostasis, which is crucial for proper mucus clearance. The polypeptide is Epithelial sodium channel subunit beta (Bos taurus (Bovine)).